The chain runs to 558 residues: Potassium-transporting ATPase potassium-binding subunit (558 aa).

12 helical membrane passes run 1–21, 66–86, 127–147, 166–186, 245–265, 281–301, 327–347, 354–374, 377–397, 416–436, 482–502, and 531–551; these read MEII…SGYL, FNGF…WLFL, MIVM…VCIA, IVRF…ILLM, IWSN…MLFL, ALIL…LTMW, FGAG…TGSV, LTPL…VFGG, VGLM…SLMV, IVLV…LAFM, ISTG…QLMI, and IVFI…LGPI.

This sequence belongs to the KdpA family. As to quaternary structure, the system is composed of three essential subunits: KdpA, KdpB and KdpC.

It localises to the cell membrane. Functionally, part of the high-affinity ATP-driven potassium transport (or Kdp) system, which catalyzes the hydrolysis of ATP coupled with the electrogenic transport of potassium into the cytoplasm. This subunit binds the extracellular potassium ions and delivers the ions to the membrane domain of KdpB through an intramembrane tunnel. In Staphylococcus aureus (strain MSSA476), this protein is Potassium-transporting ATPase potassium-binding subunit.